The following is a 120-amino-acid chain: Peptidyl-tRNA hydrolase (120 aa).

Belongs to the PTH2 family.

The protein resides in the cytoplasm. The catalysed reaction is an N-acyl-L-alpha-aminoacyl-tRNA + H2O = an N-acyl-L-amino acid + a tRNA + H(+). The natural substrate for this enzyme may be peptidyl-tRNAs which drop off the ribosome during protein synthesis. The chain is Peptidyl-tRNA hydrolase from Saccharolobus islandicus (strain Y.N.15.51 / Yellowstone #2) (Sulfolobus islandicus).